The chain runs to 477 residues: MEDPLLLGDDQLITRNLKSTPTWWMNFTAELKNVSSMAAPMATVTVSQYLLPVISVMVAGHCGELQLSGVTLATAFANVSGFGIMYGLVGALETLCGQAYGAKQYTKIGTYTFSAIVSNVPIVVLISILWFYMDKLFVSLGQDPDISKVAGSYAVCLIPALLAQAVQQPLTRFLQTQGLVLPLLYCAITTLLFHIPVCLILVYAFGLGSNGAALAIGLSYWFNVLILALYVRFSSACEKTRGFVSDDFVLSVKQFFQYGIPSAAMTTIEWSLFELLILSSGLLPNPKLETSVLSICLTTSSLHCVIPMGIGAAGSTRISNELGAGNPEVARLAVFAGIFLWFLEATICSTLLFTCKNIFGYAFSNSKEVVDYVTELSSLLCLSFMVDGFSSVLDGVARGSGWQNIGAWANVVAYYLLGAPVGFFLGFWGHMNGKGLWIGVIVGSTAQGIILAIVTACLSWEEQAAKARERIVGRTLE.

The next 12 membrane-spanning stretches (helical) occupy residues 38–58, 72–92, 113–133, 146–166, 187–207, 211–231, 263–283, 292–312, 333–353, 376–396, 411–431, and 436–456; these read AAPM…SVMV, LATA…VGAL, FSAI…WFYM, ISKV…AQAV, AITT…AFGL, GAAL…ALYV, AAMT…SGLL, VLSI…GIGA, AVFA…TLLF, LSSL…LDGV, VVAY…WGHM, and LWIG…IVTA.

It belongs to the multi antimicrobial extrusion (MATE) (TC 2.A.66.1) family.

Its subcellular location is the membrane. In Arabidopsis thaliana (Mouse-ear cress), this protein is Protein DETOXIFICATION 5.